The sequence spans 985 residues: SWI/SNF complex subunit SWI3D (985 aa).

The segment at 1–55 (MEEKRRDSAGTLAFAGSSGDSPASEPMPAPRRRGGGLKRKANALGGSNFFSSAPS) is disordered. The segment covering 30 to 41 (PRRRGGGLKRKA) has biased composition (basic residues). Positions 108 to 133 (EKPKEEEERNKAIREWEALEAKIEAD) form a coiled coil. The SWIRM domain maps to 145 to 242 (HVVPNHCGWF…FHPFPPTDTG (98 aa)). The segment at 305 to 359 (AVEYHCNSCSADCSRKRYHCPKQADFDLCTECFNSGKFSSDMSSSDFILMEPAEA) adopts a ZZ-type; degenerate zinc-finger fold. Residues C310, C313, C333, and C336 each coordinate Zn(2+). Residues 362–413 (VGSGKWTDQETLLLLEALEIFKENWNEIAEHVATKTKAQCMLHFLQMPIEDA) form the SANT domain. Basic and acidic residues-rich tracts occupy residues 428-464 (TTDLAVSKDDNSVLKDAPEEAENKKRVDEDETMKEVP), 493-502 (AEQKTPKLET), and 615-661 (DNSH…EKQP). Disordered regions lie at residues 428 to 502 (TTDL…KLET) and 591 to 814 (EDPP…EGKK). The span at 662–671 (GSRTENSTTK) shows a compositional bias: polar residues. Positions 703–724 (CSGKELQEPLKDGNKLSSENKD) are enriched in basic and acidic residues. Over residues 725–736 (ASQSTVSQSAAD) the composition is skewed to polar residues. Over residues 742 to 776 (ASRDVEMKDTLQSEKDPEDVVKTVGEKVQLAKEEG) the composition is skewed to basic and acidic residues. Residues 780-800 (VLSTPDKSVSQQPIGSASAPE) show a composition bias toward polar residues. Residues 839–900 (ISAAAVKAKN…EQLERSRQRL (62 aa)) are a coiled coil. The interval 944–985 (MAFPRPPMPRPPGFPVPGSFVAATTMTGSSDPSPGSDNVSSV) is disordered. Positions 947–958 (PRPPMPRPPGFP) are enriched in pro residues. Polar residues predominate over residues 965–985 (AATTMTGSSDPSPGSDNVSSV).

In terms of assembly, interacts with SWI3B, but not with BSH. Component of a RNA-directed DNA methylation (RdDM) complex that contains at least MORC6, MORC1/CRT1, MORC2, SWI3D and SUVH9. Interacts with MORC6 and SUVH9. In terms of tissue distribution, ubiquitously expressed.

It localises to the nucleus. In terms of biological role, component of a multiprotein complex equivalent of the SWI/SNF complex, an ATP-dependent chromatin-remodeling complex, which is required for the positive and negative regulation of gene expression of a large number of genes. It changes chromatin structure by altering DNA-histone contacts within a nucleosome, leading eventually to a change in nucleosome position, thus facilitating or repressing binding of gene-specific transcription factors. This is SWI/SNF complex subunit SWI3D (SWI3D) from Arabidopsis thaliana (Mouse-ear cress).